Consider the following 371-residue polypeptide: 4-hydroxy-3-methylbut-2-en-1-yl diphosphate synthase (flavodoxin) (371 aa).

Cysteine 268, cysteine 271, cysteine 303, and glutamate 310 together coordinate [4Fe-4S] cluster.

The protein belongs to the IspG family. [4Fe-4S] cluster is required as a cofactor.

The enzyme catalyses (2E)-4-hydroxy-3-methylbut-2-enyl diphosphate + oxidized [flavodoxin] + H2O + 2 H(+) = 2-C-methyl-D-erythritol 2,4-cyclic diphosphate + reduced [flavodoxin]. The protein operates within isoprenoid biosynthesis; isopentenyl diphosphate biosynthesis via DXP pathway; isopentenyl diphosphate from 1-deoxy-D-xylulose 5-phosphate: step 5/6. Its function is as follows. Converts 2C-methyl-D-erythritol 2,4-cyclodiphosphate (ME-2,4cPP) into 1-hydroxy-2-methyl-2-(E)-butenyl 4-diphosphate. In Lysinibacillus sphaericus (strain C3-41), this protein is 4-hydroxy-3-methylbut-2-en-1-yl diphosphate synthase (flavodoxin).